Reading from the N-terminus, the 419-residue chain is Diaminopimelate decarboxylase (419 aa).

N6-(pyridoxal phosphate)lysine is present on K56. Pyridoxal 5'-phosphate contacts are provided by residues G234 and 274–277 (EPGR). 3 residues coordinate substrate: R277, R312, and Y316. C343 (proton donor) is an active-site residue. Positions 344 and 372 each coordinate substrate. Position 372 (Y372) interacts with pyridoxal 5'-phosphate.

The protein belongs to the Orn/Lys/Arg decarboxylase class-II family. LysA subfamily. In terms of assembly, homodimer. The cofactor is pyridoxal 5'-phosphate.

The enzyme catalyses meso-2,6-diaminopimelate + H(+) = L-lysine + CO2. It functions in the pathway amino-acid biosynthesis; L-lysine biosynthesis via DAP pathway; L-lysine from DL-2,6-diaminopimelate: step 1/1. Its function is as follows. Specifically catalyzes the decarboxylation of meso-diaminopimelate (meso-DAP) to L-lysine. This Archaeoglobus fulgidus (strain ATCC 49558 / DSM 4304 / JCM 9628 / NBRC 100126 / VC-16) protein is Diaminopimelate decarboxylase.